A 766-amino-acid chain; its full sequence is Protein STB6 (766 aa).

A disordered region spans residues 447 to 469; it reads VPSEQLTTSNKEDSDTQPTKRNS. Residue Ser-514 is modified to Phosphoserine.

The protein to yeast STB2.

Its function is as follows. Binds to SIN3. The protein is Protein STB6 (STB6) of Saccharomyces cerevisiae (strain ATCC 204508 / S288c) (Baker's yeast).